The sequence spans 248 residues: tRNA (guanine-N(1)-)-methyltransferase (248 aa).

Residues G113 and 133-138 contribute to the S-adenosyl-L-methionine site; that span reads IGDYVL.

Belongs to the RNA methyltransferase TrmD family. In terms of assembly, homodimer.

Its subcellular location is the cytoplasm. It carries out the reaction guanosine(37) in tRNA + S-adenosyl-L-methionine = N(1)-methylguanosine(37) in tRNA + S-adenosyl-L-homocysteine + H(+). Specifically methylates guanosine-37 in various tRNAs. The protein is tRNA (guanine-N(1)-)-methyltransferase of Shewanella denitrificans (strain OS217 / ATCC BAA-1090 / DSM 15013).